We begin with the raw amino-acid sequence, 322 residues long: Hydrolase C26A3.11 (322 aa).

The region spanning 44–290 is the CN hydrolase domain; the sequence is FRIGLVQLAN…PSIVYADIDP (247 aa). Residue Glu83 is the Proton acceptor of the active site. Catalysis depends on Lys154, which acts as the Proton donor. Cys195 acts as the Nucleophile in catalysis.

Belongs to the carbon-nitrogen hydrolase superfamily. NIT1/NIT2 family.

This is Hydrolase C26A3.11 from Schizosaccharomyces pombe (strain 972 / ATCC 24843) (Fission yeast).